Here is a 317-residue protein sequence, read N- to C-terminus: DNA-directed RNA polymerase subunit alpha (317 aa).

Residues Met-1 to Asn-234 are alpha N-terminal domain (alpha-NTD). Positions Asp-250 to Ser-317 are alpha C-terminal domain (alpha-CTD).

This sequence belongs to the RNA polymerase alpha chain family. Homodimer. The RNAP catalytic core consists of 2 alpha, 1 beta, 1 beta' and 1 omega subunit. When a sigma factor is associated with the core the holoenzyme is formed, which can initiate transcription.

It carries out the reaction RNA(n) + a ribonucleoside 5'-triphosphate = RNA(n+1) + diphosphate. Its function is as follows. DNA-dependent RNA polymerase catalyzes the transcription of DNA into RNA using the four ribonucleoside triphosphates as substrates. The protein is DNA-directed RNA polymerase subunit alpha of Mycoplasma mycoides subsp. mycoides SC (strain CCUG 32753 / NCTC 10114 / PG1).